The sequence spans 208 residues: Putative RING finger protein 413R (208 aa).

The disordered stretch occupies residues Met1–Arg87. The segment covering Asp22–Tyr71 has biased composition (acidic residues). Basic and acidic residues predominate over residues Tyr72 to Asp82. Residues Asp83–Thr147 are a coiled coil. The RING-type zinc finger occupies Cys148–Arg196.

The polypeptide is Putative RING finger protein 413R (EF2) (Acheta domesticus (House cricket)).